A 310-amino-acid polypeptide reads, in one-letter code: ER-derived vesicles protein ERV29 (310 aa).

Residues 1 to 108 are Cytoplasmic-facing; it reads MSYRGPIGNF…YLNKWKHYPY (108 aa). Positions 11 to 31 are disordered; that stretch reads GGMPMSSSQGPYSGGAQFRSN. Residues 109 to 129 form a helical membrane-spanning segment; it reads FFVVVFLVVVTVSMLIGASLL. Topologically, residues 130–137 are lumenal; sequence VLRKQTNY. The chain crosses the membrane as a helical span at residues 138 to 158; that stretch reads ATGVLCACVISQALVYGLFTG. The Cytoplasmic portion of the chain corresponds to 159–209; that stretch reads SSFVLRNFSVIGGLLIAFSDSIVQNKTTFGMLPELNSKNDKAKGYLLFAGR. A helical transmembrane segment spans residues 210-230; it reads ILIVLMFIAFTFSKSWFTVVL. The Lumenal portion of the chain corresponds to 231-245; sequence TIIGTICFAIGYKTK. A helical transmembrane segment spans residues 246 to 266; that stretch reads FASIMLGLILTFYNITLNNYW. Topologically, residues 267–310 are cytoplasmic; the sequence is FYNNTKRDFLKYEFYQNLSIIGGLLLVTNTGAGELSVDEKKKIY. Positions 307–310 match the Di-lysine motif motif; sequence KKIY.

It belongs to the SURF4 family.

It is found in the endoplasmic reticulum membrane. Constituent of COPII-coated endoplasmic reticulum-derived transport vesicles. Required for efficient transport of a subset of secretory proteins to the Golgi. The C-terminal di-lysine motif is required for exit from the endoplasmic reticulum. Required directly for packaging glycosylated pro-alpha-factor into COPII vesicles. Facilitates retrograde transport from the Golgi to the endoplasmic reticulum. This chain is ER-derived vesicles protein ERV29 (ERV29), found in Saccharomyces cerevisiae (strain ATCC 204508 / S288c) (Baker's yeast).